Reading from the N-terminus, the 223-residue chain is MKRTKSIRHASFRKNWSARHLTPVALAVATVFMLAGCEKSDETVSLYQNADDCSAANPGKSAECTTAYNNALKEAERTAPKYATREDCVAEFGEGQCQQAPAQAGMAPENQAQAQQSSGSFWMPLMAGYMMGRLMGGGAGFAQQPLFSSKNPASPAYGKYTDATGKNYGAAQPGRTMTVPKTAMAPKPATTTTVTRGGFGESVAKQSTMQRSATGTSSRSMGG.

The span at 178-195 (TVPKTAMAPKPATTTTVT) shows a compositional bias: low complexity. A disordered region spans residues 178–223 (TVPKTAMAPKPATTTTVTRGGFGESVAKQSTMQRSATGTSSRSMGG). The segment covering 204–223 (AKQSTMQRSATGTSSRSMGG) has biased composition (polar residues).

The protein belongs to the UPF0441 family.

The protein is UPF0441 protein YgiB of Shigella flexneri serotype 5b (strain 8401).